Here is a 2335-residue protein sequence, read N- to C-terminus: MFTTMSLVTSIKDYVEVVHKLIETDPNFNITTYYDFGSILTFVILSGKDLIGKFLSFQWFQTIWSIPTLIPDIASAMISEISIFDGYFQNTQTLLESPISYGNNNFFIYCSEKFMIGLLNSVFLCLPTSIAHIITLRRFVMQGLEAGFISGLGTIAGNIVWIGSIVFGLRFVVIPWLSLDLFRAFLGFVLIVKYMWDSYTERRMVLEDLSKYKIFFLTFLLSFTEQTTIYPFLSNLSLGSDSTLLESFPTENFYEFGFVHLCYLLGILVGSLSLLQFTCWFWENPAFQIYMWFISSFKTTTSVYSKFVNLTFLYLTMICAISNIAYFGLDYTLTNPLGFVHEDRLLDQKALLETAFLNTKASDRNTRRNRGRHGRRERWKRRVRRYRTFDASLYDQGVYDLLTLEDLNYGFDRFWLRRKIRNHRVRFRFFPGPWMRSFKKQLSRPRLESFMGPRVEFFRILFEQAYHPEFHEFSTKKNVLKQNQTSTQSSSSNQFQIPFFGQQNNERSAKGEKMENIQSIYWNPIGNKKEKLLKEQSTLRKFVRKVNTRIQVAKIQSELKRPQNLELSLENSKNLTQPISSKAWNSFAVLETGDLNSTQFTLNKDGNQRKDLSVFKKSEENILFQRFYNKIFLEQNQKKNIFGVKTSESLSGKNFENNFQNTLSKKERFLERYKTFLRTPAAVSEQKQLKIQTKNSSEKSMLLPLTSETSSFNTFSQKPNSSSSILSQKNLETQSNLRNLQNESQYRSMTLLHPLKFYFQKEQAFQRKLNFYGVKLFRNFGVENNAPYYRVMMKRFFYHYKPTLRWERTLRVATMRRARRKSSRIPRKFNVSKSSQILATGSADFNTLEKENNLKKNQVFDQSVITKPTHFYSLVEKRASRYRYQIYKDVLQHWYYSPLNRFLLKVDVDSFIRRQPKSYFLTKNDEKFLHLKRQLLSEYYETLRWYTYMQHYSTMKNQIGGTKSLSSRAYNQQFVGTFKKIRHLFNITPTLNDTNVLKFDQPLYNEYKNSQNLSVFNESIVHEELLADDFFFLKNEKKEKNTATSESISFNQTKEKSNSTLGRLPDDLPNQSANILREYLATATPIRQEYIQNLLREKNYWELTKFLFRGQKIRGTNPITNETTFLNQEKTYLLDSKFKTPEFDTQKFKEEMWISLLKKCQNKLYDQEALKNYVTLKKEKYENKKQKHERYLKNRLERMKEAFILQNRGEQKQNGNFEFQNFSGYTSSIQKAMKESIIWEKNSLSSSSFQTIDKFFAKKNFLQKTNIRNNRPNIYLGLKENLNVSDLQENKNQQNFDSTQTNQVNPQKMQAFVFTTSLKNSFKQRAFEIIEAENLFKKNFSSSKFEKKSFLLNSKPMNAIQKFFSNTLRFKNFTSSNQVLQTPKPKFIQNIPILSKIVSIGKYGTRETSQKNLDFWKKRENALSKRRKIRKTLKRLRNQNTSTEKIVFENRDFGSQMQTSQLTKNSFNPSRQKTDKNLENSLDSVNSFFSKIERTNDFSEKEQGTRSESWKKYYSYKPNQNQSKNNEESLVSERETFMQKLVALPKNVFEKGQKSFFPKKFQRKRSRLRRYSSFKGRGPIKKRTLREKLKRQFKSLKKYGTTQENSTSQQIQLERENKKFELIQLITQRSSVLRGDQKFLKREQKQRRTRQMKHRAWKKKKQNFAQKRRKLRKRRRSTIAKIRVFNKKLQRILSKKEIQKWWWQTFFPTFQKETETTWQNQKNMQIRKELFELSEKEILERDQMTNAIEQNNEKTENAFQALQIGDKDYKPFAIPEALRIREKLIQKDILRFNGPKENSFIESSTNSFDNSKNLNASTSEEFKLQNSRNLSSQMSQTMVDSQSNFDFFEKVTGNISTNQANISNLSNSLQTQKFLVGTNPIPFYAGWDESLRKFVITNRLLSRKENFVFSTKAINTLFAAQQTNKNDSTLRQEFSKAPLQGMNAATTLYWQIPFTTYDPDQFFALGMDGFSPLGWRNFSFKHSKQTTKPILVKNFFSFQNNSKEFSKNLQFKFLQNTLKTKIFNPNTCNNVQNCLNLNEFEKTNTVGFSTTSQKKLFSKAEIDKNFEYRRILKKQKRIKKHPRPPVWFPSGSLSQQVLPVHYIYVFYKRSRLPRDRYIRRRLRSTFLKNKNSTETFANNPTITKITDFTLRKRTKPRRKYHRKRFLLDTNQFLLRRRKFRSFLDENETIRPSSKLFETSKQEKRILKSKQRRKITDSKQSTENLRLRQLRRRVQRQVFRPVSRYQPRAGGFVWPGDYLRLELVKAPQLNTTPLSSGGTQENIEVFQQENSSRKIRKKKRRTLQEWQIQPKKYLLEKHNIKVLKKRLKKSLQNTNF.

Helical transmembrane passes span 114–134 (FMIGLLNSVFLCLPTSIAHII), 148–167 (FISGLGTIAGNIVWIGSIVF), 172–194 (VVIPWLSLDLFRAFLGFVLIVKY), 214–234 (IFFLTFLLSFTEQTTIYPFLS), 255–275 (EFGFVHLCYLLGILVGSLSLL), and 307–327 (FVNLTFLYLTMICAISNIAYF). The span at 1043–1052 (ATSESISFNQ) shows a compositional bias: polar residues. The disordered stretch occupies residues 1043–1064 (ATSESISFNQTKEKSNSTLGRL). Coiled-coil stretches lie at residues 1174-1202 (VTLKKEKYENKKQKHERYLKNRLERMKEA) and 1417-1447 (KKRENALSKRRKIRKTLKRLRNQNTSTEKIV). A compositionally biased stretch (polar residues) spans 1458–1471 (QTSQLTKNSFNPSR). Residues 1458–1479 (QTSQLTKNSFNPSRQKTDKNLE) are disordered. A helical membrane pass occupies residues 2086–2106 (VWFPSGSLSQQVLPVHYIYVF). Residues 2200-2222 (KQEKRILKSKQRRKITDSKQSTE) form a disordered region.

Belongs to the ycf78 family.

It localises to the plastid. The protein localises to the chloroplast membrane. This is an uncharacterized protein from Tetradesmus obliquus (Green alga).